Consider the following 747-residue polypeptide: Elongation factor G, mitochondrial (747 aa).

The N-terminal 32 residues, Met1–His32, are a transit peptide targeting the mitochondrion. Residues Glu42–Gly319 form the tr-type G domain. GTP-binding positions include Ala51–Thr58, Asp118–His122, and Asn172–Asp175.

This sequence belongs to the TRAFAC class translation factor GTPase superfamily. Classic translation factor GTPase family. EF-G/EF-2 subfamily.

The protein localises to the mitochondrion. It participates in protein biosynthesis; polypeptide chain elongation. Mitochondrial GTPase that catalyzes the GTP-dependent ribosomal translocation step during translation elongation. During this step, the ribosome changes from the pre-translocational (PRE) to the post-translocational (POST) state as the newly formed A-site-bound peptidyl-tRNA and P-site-bound deacylated tRNA move to the P and E sites, respectively. Catalyzes the coordinated movement of the two tRNA molecules, the mRNA and conformational changes in the ribosome. Essential during development as it acts as a retrograde signal from mitochondria to the nucleus to slow down cell proliferation if mitochondrial energy output is low. The chain is Elongation factor G, mitochondrial from Drosophila virilis (Fruit fly).